We begin with the raw amino-acid sequence, 223 residues long: Adenine phosphoribosyltransferase (223 aa).

Belongs to the purine/pyrimidine phosphoribosyltransferase family. Homodimer.

It localises to the cytoplasm. The enzyme catalyses AMP + diphosphate = 5-phospho-alpha-D-ribose 1-diphosphate + adenine. It functions in the pathway purine metabolism; AMP biosynthesis via salvage pathway; AMP from adenine: step 1/1. In terms of biological role, catalyzes a salvage reaction resulting in the formation of AMP, that is energically less costly than de novo synthesis. The protein is Adenine phosphoribosyltransferase of Mycobacterium bovis (strain ATCC BAA-935 / AF2122/97).